Consider the following 606-residue polypeptide: NADH-ubiquinone oxidoreductase chain 5 (606 aa).

Transmembrane regions (helical) follow at residues 4 to 24 (FSSL…AINF), 43 to 63 (AFIT…EMII), 84 to 104 (FFSM…MEFS), 114 to 134 (INQF…LVTA), 140 to 160 (LFIG…WWYG), 171 to 191 (AILY…WFLI), 213 to 233 (LMGL…HPWL), 241 to 261 (TPVS…FLLI), 272 to 292 (FGQS…AMCA), 301 to 320 (IIAF…IGIN), 325 to 347 (AFLH…GSII), 366 to 386 (MPFT…MPFL), 413 to 433 (LVAT…ALLG), 457 to 477 (LLIG…PMTI), 485 to 505 (YLKM…LEIS), and 582 to 602 (GLIK…TTLL).

The protein belongs to the complex I subunit 5 family. In terms of assembly, core subunit of respiratory chain NADH dehydrogenase (Complex I) which is composed of 45 different subunits.

Its subcellular location is the mitochondrion inner membrane. The enzyme catalyses a ubiquinone + NADH + 5 H(+)(in) = a ubiquinol + NAD(+) + 4 H(+)(out). In terms of biological role, core subunit of the mitochondrial membrane respiratory chain NADH dehydrogenase (Complex I) which catalyzes electron transfer from NADH through the respiratory chain, using ubiquinone as an electron acceptor. Essential for the catalytic activity and assembly of complex I. The polypeptide is NADH-ubiquinone oxidoreductase chain 5 (MT-ND5) (Ovis aries (Sheep)).